The primary structure comprises 579 residues: Threonylcarbamoyladenosine tRNA methylthiotransferase (579 aa).

Ser53 bears the Phosphoserine mark. The 109-residue stretch at 64-172 folds into the MTTase N-terminal domain; that stretch reads QKIWIRTWGC…VVEVVEETIK (109 aa). [4Fe-4S] cluster is bound by residues Cys73 and Cys109. Ser122 carries the phosphoserine modification. [4Fe-4S] cluster contacts are provided by Cys138, Cys214, Cys218, and Cys221. Residues 200–431 form the Radical SAM core domain; it reads RKNPLIEIIS…RVFHSYSPYD (232 aa). Residues 431 to 493 enclose the TRAM domain; that stretch reads DHKIGERQQV…KHFMKGQPVS (63 aa). At Thr499 the chain carries Phosphothreonine. A helical transmembrane segment spans residues 556-578; the sequence is CALRMSVGLALLGLLFAFFVKVY.

This sequence belongs to the methylthiotransferase family. CDKAL1 subfamily. [4Fe-4S] cluster serves as cofactor. Expressed in pancreatic islets.

The protein localises to the endoplasmic reticulum membrane. The catalysed reaction is N(6)-L-threonylcarbamoyladenosine(37) in tRNA + (sulfur carrier)-SH + AH2 + 2 S-adenosyl-L-methionine = 2-methylsulfanyl-N(6)-L-threonylcarbamoyladenosine(37) in tRNA + (sulfur carrier)-H + 5'-deoxyadenosine + L-methionine + A + S-adenosyl-L-homocysteine + 2 H(+). Functionally, catalyzes the methylthiolation of N6-threonylcarbamoyladenosine (t(6)A), leading to the formation of 2-methylthio-N6-threonylcarbamoyladenosine (ms(2)t(6)A) at position 37 in tRNAs that read codons beginning with adenine. The protein is Threonylcarbamoyladenosine tRNA methylthiotransferase (CDKAL1) of Homo sapiens (Human).